A 150-amino-acid polypeptide reads, in one-letter code: MNPHSWLILKRKVRFGDCDSAGVIHFHNLLRWAHESWEESIDIYGISHQVIFPSCHSHENQNILPIVNCEANFLLPIKLGDLLTVKIFPKKISNHLFQVNTLFLKDEIKVAEGKIIHCSLDMNSKLKVKLPDQLERWIEASNINTHLKEC.

Asp19 is a catalytic residue.

Belongs to the 4-hydroxybenzoyl-CoA thioesterase family. DHNA-CoA hydrolase subfamily.

The catalysed reaction is 1,4-dihydroxy-2-naphthoyl-CoA + H2O = 1,4-dihydroxy-2-naphthoate + CoA + H(+). The protein operates within cofactor biosynthesis; phylloquinone biosynthesis. Its pathway is quinol/quinone metabolism; 1,4-dihydroxy-2-naphthoate biosynthesis; 1,4-dihydroxy-2-naphthoate from chorismate: step 7/7. Functionally, catalyzes the hydrolysis of 1,4-dihydroxy-2-naphthoyl-CoA (DHNA-CoA) to 1,4-dihydroxy-2-naphthoate (DHNA), a reaction involved in phylloquinone (vitamin K1) biosynthesis. This chain is 1,4-dihydroxy-2-naphthoyl-CoA hydrolase, found in Prochlorococcus marinus (strain MIT 9515).